The following is a 76-amino-acid chain: Horsegram inhibitor 1 (76 aa).

Cystine bridges form between cysteine 16–cysteine 70, cysteine 17–cysteine 32, cysteine 20–cysteine 66, cysteine 22–cysteine 30, cysteine 40–cysteine 47, cysteine 44–cysteine 59, and cysteine 49–cysteine 57.

Belongs to the Bowman-Birk serine protease inhibitor family. As to quaternary structure, HGI-III exists in a state of equilibrium between monomer, homodimer and trimer, with homodimer being the predominant form. The homodimer is stabilized by the non-covalent interaction between Lys-24 of one subunit and Asp-76 of the other subunit. The homodimer is more thermostable than the monomer. HGGI-I, HGGI-II and HGGI-III exist as monomers. Post-translationally, HGGI-I, HGGI-II and HGGI-III are produced by proteolysis of the N- and C-termini of HGI-III.

In terms of biological role, inhibitors of trypsin and chymotrypsin. HGGI-III has a higher activity than HGGI-I or HGGI-II. The polypeptide is Horsegram inhibitor 1 (Vigna unguiculata subsp. cylindrica (Horse gram)).